A 50-amino-acid polypeptide reads, in one-letter code: Alpha-conotoxin CnIG (50 aa).

The first 7 residues, 1 to 7 (LTTTVVS), serve as a signal peptide directing secretion. The span at 1–13 (LTTTVVSFPSDSA) shows a compositional bias: polar residues. The segment at 1 to 26 (LTTTVVSFPSDSASDGRDNEAKDERS) is disordered. A propeptide spanning residues 8–35 (FPSDSASDGRDNEAKDERSDMYELKRNG) is cleaved from the precursor. The segment covering 14–26 (SDGRDNEAKDERS) has biased composition (basic and acidic residues). 2 cysteine pairs are disulfide-bonded: Cys-37–Cys-42 and Cys-38–Cys-48. The residue at position 48 (Cys-48) is a Cysteine amide.

The protein belongs to the conotoxin A superfamily. Expressed by the venom duct.

It is found in the secreted. The polypeptide is Alpha-conotoxin CnIG (Conus consors (Singed cone)).